Here is a 748-residue protein sequence, read N- to C-terminus: tRNA endonuclease ANKZF1 (748 aa).

The C2H2-type zinc-finger motif lies at 96-120 (LFCSACDQIFQNHQEQREHYKLDWH). Positions 135-185 (SASDFEQQSSTGDLSSISGSDDTDSSSEEDLLPLDEGRAESEKPNRPPGFY) are disordered. The span at 143–154 (SSTGDLSSISGS) shows a compositional bias: low complexity. Acidic residues predominate over residues 155–167 (DDTDSSSEEDLLP). Residues 169-179 (DEGRAESEKPN) show a composition bias toward basic and acidic residues. Residues 227-370 (GPRYYVVLMA…QRVLHKLTTL (144 aa)) form the VLRF1 domain. Q270 is an active-site residue. A phosphoserine mark is found at S282 and S385. Residues 383–408 (FHSPETHWKPVREERKKDTEKEKTKV) are compositionally biased toward basic and acidic residues. Disordered regions lie at residues 383 to 438 (FHSP…SEVE) and 460 to 497 (RRRR…TQEV). Residues 429–438 (SQEEDGSEVE) are compositionally biased toward acidic residues. Residues 484–497 (QPQDEPFSQPTQEV) show a composition bias toward polar residues. The ANK 1 repeat unit spans residues 515-545 (ELWDTLLAACRAGEVEVLKLQLATGLVDPGV). The residue at position 555 (S555) is a Phosphoserine. One copy of the ANK 2 repeat lies at 556–585 (GGFTLLHAAAAAGRGLVVRLLLEAGADPTV). A disordered region spans residues 621–677 (KARVPGPLTQEMEARQATRKKEQKAARRQREQQQRKQREQEEQEQEEQRRFAALSDR). The stretch at 628-681 (LTQEMEARQATRKKEQKAARRQREQQQRKQREQEEQEQEEQRRFAALSDREKRA) forms a coiled coil. The residue at position 629 (T629) is a Phosphothreonine. The span at 632–677 (MEARQATRKKEQKAARRQREQQQRKQREQEEQEQEEQRRFAALSDR) shows a compositional bias: basic and acidic residues. The tract at residues 654–666 (QRKQREQEEQEQE) is VCP/p97-interacting motif (VIM). S702 is modified (phosphoserine).

This sequence belongs to the ANKZF1/VMS1 family. Interacts (via VIM motif) with VCP.

It localises to the cytoplasm. Its function is as follows. Endonuclease that cleaves polypeptidyl-tRNAs downstream of the ribosome-associated quality control (RQC) pathway to release incompletely synthesized polypeptides for degradation. The RQC pathway disassembles aberrantly stalled translation complexes to recycle or degrade the constituent parts. ANKZF1 acts downstream disassembly of stalled ribosomes and specifically cleaves off the terminal 3'-CCA nucleotides universal to all tRNAs from polypeptidyl-tRNAs, releasing (1) ubiquitinated polypeptides from 60S ribosomal subunit for degradation and (2) cleaved tRNAs. ANKZF1-cleaved tRNAs are then repaired and recycled by ELAC1 and TRNT1. Also plays a role in the cellular response to hydrogen peroxide and in the maintenance of mitochondrial integrity under conditions of cellular stress. The chain is tRNA endonuclease ANKZF1 from Mus musculus (Mouse).